Reading from the N-terminus, the 122-residue chain is Riboflavin kinase (122 aa).

A CDP-binding site is contributed by 4–9 (GFGEGA). Mg(2+) contacts are provided by Thr33 and Asn35. Residues Thr84 and Glu92 each coordinate FMN. A CDP-binding site is contributed by 97–100 (VNLR).

It belongs to the archaeal riboflavin kinase family. Mg(2+) is required as a cofactor.

It carries out the reaction riboflavin + CTP = CDP + FMN + H(+). The protein operates within cofactor biosynthesis; FMN biosynthesis; FMN from riboflavin (CTP route): step 1/1. Functionally, catalyzes the CTP-dependent phosphorylation of riboflavin (vitamin B2) to form flavin mononucleotide (FMN). In Methanothermobacter thermautotrophicus (strain ATCC 29096 / DSM 1053 / JCM 10044 / NBRC 100330 / Delta H) (Methanobacterium thermoautotrophicum), this protein is Riboflavin kinase.